The primary structure comprises 351 residues: Uroporphyrinogen decarboxylase (351 aa).

Residues 25–29, F43, D74, Y151, S206, and H325 contribute to the substrate site; that span reads RQAGR.

It belongs to the uroporphyrinogen decarboxylase family. As to quaternary structure, homodimer.

It is found in the cytoplasm. It carries out the reaction uroporphyrinogen III + 4 H(+) = coproporphyrinogen III + 4 CO2. The protein operates within porphyrin-containing compound metabolism; protoporphyrin-IX biosynthesis; coproporphyrinogen-III from 5-aminolevulinate: step 4/4. Functionally, catalyzes the decarboxylation of four acetate groups of uroporphyrinogen-III to yield coproporphyrinogen-III. The polypeptide is Uroporphyrinogen decarboxylase (Chlorobaculum tepidum (strain ATCC 49652 / DSM 12025 / NBRC 103806 / TLS) (Chlorobium tepidum)).